The sequence spans 626 residues: Glutamate--cysteine ligase (626 aa).

It belongs to the glutamate--cysteine ligase type 3 family. Monomer.

The enzyme catalyses L-cysteine + L-glutamate + ATP = gamma-L-glutamyl-L-cysteine + ADP + phosphate + H(+). It participates in sulfur metabolism; glutathione biosynthesis; glutathione from L-cysteine and L-glutamate: step 1/2. Functionally, an essential enzyme in glutathione (L-gamma-glutamyl-L-cysteinylglycine, GSH) biosynthesis, GSH is essential for growth and differentiation to prespore stage. Catalyzes the condensation of glutamate to cysteine. The protein is Glutamate--cysteine ligase (gcsA) of Dictyostelium discoideum (Social amoeba).